The sequence spans 608 residues: Microtubule-associated protein 70-3 (608 aa).

The disordered stretch occupies residues 1–23 (MADGVEEGNAVAPRGPARRRGTV). Residues 40–346 (DPVRVELTRL…ARSEAQLKEK (307 aa)) adopt a coiled-coil conformation. A required for targeting to microtubules region spans residues 224-458 (ILDKLQRQKV…HLLNRSTDAV (235 aa)). Disordered regions lie at residues 354–493 (LEDG…TANN) and 570–608 (DKEQ…RNYQ). The span at 363–379 (SGSSRLPTEGKSFSNGP) shows a compositional bias: polar residues. The span at 402 to 421 (RRSPSFHSRSSLSSSSSLVL) shows a compositional bias: low complexity. Residues 476–493 (IENTNSNTDESNKETANN) are compositionally biased toward polar residues. The stretch at 542–576 (LTKAMEVEAKKMRREVAAMEKEVAAMRVDKEQEVK) forms a coiled coil. The segment covering 586–608 (TGSSQVLSGSRSSSRSGLTRNYQ) has biased composition (low complexity).

This sequence belongs to the MAP70 family.

The protein resides in the cytoplasm. It localises to the cytoskeleton. Functionally, plant-specific protein that interact with microtubules. The sequence is that of Microtubule-associated protein 70-3 (MAP70.3) from Oryza sativa subsp. japonica (Rice).